The primary structure comprises 495 residues: Probable cytochrome P450 4s3 (495 aa).

The heme site is built by Glu-307 and Cys-436.

The protein belongs to the cytochrome P450 family. It depends on heme as a cofactor.

Its subcellular location is the endoplasmic reticulum membrane. It localises to the microsome membrane. Functionally, may be involved in the metabolism of insect hormones and in the breakdown of synthetic insecticides. This is Probable cytochrome P450 4s3 (Cyp4s3) from Drosophila melanogaster (Fruit fly).